Here is a 123-residue protein sequence, read N- to C-terminus: Large ribosomal subunit protein bL12 (123 aa).

This sequence belongs to the bacterial ribosomal protein bL12 family. As to quaternary structure, homodimer. Part of the ribosomal stalk of the 50S ribosomal subunit. Forms a multimeric L10(L12)X complex, where L10 forms an elongated spine to which 2 to 4 L12 dimers bind in a sequential fashion. Binds GTP-bound translation factors.

In terms of biological role, forms part of the ribosomal stalk which helps the ribosome interact with GTP-bound translation factors. Is thus essential for accurate translation. The protein is Large ribosomal subunit protein bL12 of Rhodospirillum rubrum (strain ATCC 11170 / ATH 1.1.1 / DSM 467 / LMG 4362 / NCIMB 8255 / S1).